The sequence spans 476 residues: Aspartyl/glutamyl-tRNA(Asn/Gln) amidotransferase subunit B (476 aa).

This sequence belongs to the GatB/GatE family. GatB subfamily. As to quaternary structure, heterotrimer of A, B and C subunits.

The catalysed reaction is L-glutamyl-tRNA(Gln) + L-glutamine + ATP + H2O = L-glutaminyl-tRNA(Gln) + L-glutamate + ADP + phosphate + H(+). It catalyses the reaction L-aspartyl-tRNA(Asn) + L-glutamine + ATP + H2O = L-asparaginyl-tRNA(Asn) + L-glutamate + ADP + phosphate + 2 H(+). Allows the formation of correctly charged Asn-tRNA(Asn) or Gln-tRNA(Gln) through the transamidation of misacylated Asp-tRNA(Asn) or Glu-tRNA(Gln) in organisms which lack either or both of asparaginyl-tRNA or glutaminyl-tRNA synthetases. The reaction takes place in the presence of glutamine and ATP through an activated phospho-Asp-tRNA(Asn) or phospho-Glu-tRNA(Gln). The chain is Aspartyl/glutamyl-tRNA(Asn/Gln) amidotransferase subunit B from Bacillus cytotoxicus (strain DSM 22905 / CIP 110041 / 391-98 / NVH 391-98).